The following is a 350-amino-acid chain: tRNA pseudouridine synthase D (350 aa).

The Nucleophile role is filled by Asp-85. One can recognise a TRUD domain in the interval 160–310 (GVINYFGEQR…EAARRTILLR (151 aa)).

The protein belongs to the pseudouridine synthase TruD family.

It carries out the reaction uridine(13) in tRNA = pseudouridine(13) in tRNA. Functionally, responsible for synthesis of pseudouridine from uracil-13 in transfer RNAs. This Idiomarina loihiensis (strain ATCC BAA-735 / DSM 15497 / L2-TR) protein is tRNA pseudouridine synthase D.